An 83-amino-acid polypeptide reads, in one-letter code: Cytochrome b559 subunit alpha (83 aa).

A helical transmembrane segment spans residues Val-21–Trp-35. Residue His-23 participates in heme binding.

It belongs to the PsbE/PsbF family. Heterodimer of an alpha subunit and a beta subunit. PSII is composed of 1 copy each of membrane proteins PsbA, PsbB, PsbC, PsbD, PsbE, PsbF, PsbH, PsbI, PsbJ, PsbK, PsbL, PsbM, PsbT, PsbX, PsbY, PsbZ, Psb30/Ycf12, at least 3 peripheral proteins of the oxygen-evolving complex and a large number of cofactors. It forms dimeric complexes. Requires heme b as cofactor.

Its subcellular location is the plastid membrane. Functionally, this b-type cytochrome is tightly associated with the reaction center of photosystem II (PSII). PSII is a light-driven water:plastoquinone oxidoreductase that uses light energy to abstract electrons from H(2)O, generating O(2) and a proton gradient subsequently used for ATP formation. It consists of a core antenna complex that captures photons, and an electron transfer chain that converts photonic excitation into a charge separation. The polypeptide is Cytochrome b559 subunit alpha (Cuscuta reflexa (Southern Asian dodder)).